Reading from the N-terminus, the 276-residue chain is MSEPASIALQKEIVRELEVAETFDAEREIERRVAFLAERLTSTGLRALVLGISGGVDSTTAGRLCQLAVERARAAGHEALFYAMRLPHGVQADEDDAQQALSFIRPDRVLTVDIKPASDAALDALLAADVAFRDPHHQDFVHGNIKARQRMIAQYAVAGAHGGLVVGTDHAAEAVSGFFTKFGDGAADVVPLTGLTKRRVRAVGDALGAPAALVRKVPTADLETLDPGKADEDALGVTYEEIDDFLEGKPVTEQVFETIVTRYRQTDHKRRLPIAP.

ATP is bound at residue 51 to 58; it reads GISGGVDS. D57 lines the Mg(2+) pocket. Residue R148 coordinates deamido-NAD(+). Residue T168 participates in ATP binding. E173 is a Mg(2+) binding site. Residues K181 and D188 each coordinate deamido-NAD(+). K197 and T219 together coordinate ATP. Residue 268 to 269 coordinates deamido-NAD(+); it reads HK.

This sequence belongs to the NAD synthetase family. Homodimer.

The enzyme catalyses deamido-NAD(+) + NH4(+) + ATP = AMP + diphosphate + NAD(+) + H(+). The protein operates within cofactor biosynthesis; NAD(+) biosynthesis; NAD(+) from deamido-NAD(+) (ammonia route): step 1/1. Catalyzes the ATP-dependent amidation of deamido-NAD to form NAD. Uses ammonia as a nitrogen source. The protein is NH(3)-dependent NAD(+) synthetase of Streptomyces coelicolor (strain ATCC BAA-471 / A3(2) / M145).